The primary structure comprises 196 residues: Large ribosomal subunit protein eL15 (196 aa).

Disordered stretches follow at residues 72 to 93 and 163 to 196; these read SARKRRHKAGRRSKRQGVTRIT and GLTGAGRRNRGLSGKGKGSEKTRPSLRSNGGKGK.

It belongs to the eukaryotic ribosomal protein eL15 family. Part of the 50S ribosomal subunit. Interacts with protein L7Ae and weakly with L44e.

The chain is Large ribosomal subunit protein eL15 (rpl15e) from Haloarcula marismortui (strain ATCC 43049 / DSM 3752 / JCM 8966 / VKM B-1809) (Halobacterium marismortui).